Consider the following 187-residue polypeptide: Large ribosomal subunit protein eL18B (187 aa).

Threonine 134 is subject to Phosphothreonine. Serine 136 bears the Phosphoserine mark.

The protein belongs to the eukaryotic ribosomal protein eL18 family. In terms of assembly, component of the large ribosomal subunit (LSU). Mature yeast ribosomes consist of a small (40S) and a large (60S) subunit. The 40S small subunit contains 1 molecule of ribosomal RNA (18S rRNA) and at least 33 different proteins. The large 60S subunit contains 3 rRNA molecules (25S, 5.8S and 5S rRNA) and at least 46 different proteins. eL18 interacts with NAP1.

The protein localises to the cytoplasm. Its function is as follows. Component of the ribosome, a large ribonucleoprotein complex responsible for the synthesis of proteins in the cell. The small ribosomal subunit (SSU) binds messenger RNAs (mRNAs) and translates the encoded message by selecting cognate aminoacyl-transfer RNA (tRNA) molecules. The large subunit (LSU) contains the ribosomal catalytic site termed the peptidyl transferase center (PTC), which catalyzes the formation of peptide bonds, thereby polymerizing the amino acids delivered by tRNAs into a polypeptide chain. The nascent polypeptides leave the ribosome through a tunnel in the LSU and interact with protein factors that function in enzymatic processing, targeting, and the membrane insertion of nascent chains at the exit of the ribosomal tunnel. The polypeptide is Large ribosomal subunit protein eL18B (rpl1802) (Schizosaccharomyces pombe (strain 972 / ATCC 24843) (Fission yeast)).